Reading from the N-terminus, the 494-residue chain is O-acetyltransferase ptmV (494 aa).

A disordered region spans residues 181–203 (ESQQDSREKLRHSGGPPDPRFDH).

This sequence belongs to the fumigaclavine B O-acetyltransferase family. In terms of assembly, monomer.

The protein operates within secondary metabolite biosynthesis. In terms of biological role, O-acetyltransferase; part of the gene cluster that mediates the biosynthesis of the indole diterpenes penitrems. The geranylgeranyl diphosphate (GGPP) synthase ptmG catalyzes the first step in penitrem biosynthesis via conversion of farnesyl pyrophosphate and isopentyl pyrophosphate into geranylgeranyl pyrophosphate (GGPP). Condensation of indole-3-glycerol phosphate with GGPP by the prenyl transferase ptmC then forms 3-geranylgeranylindole (3-GGI). Epoxidation by the FAD-dependent monooxygenase ptmM leads to a epoxidized-GGI that is substrate of the terpene cyclase ptmB for cyclization to yield paspaline. Paspaline is subsequently converted to 13-desoxypaxilline by the cytochrome P450 monooxygenase ptmP, the latter being then converted to paxilline by the cytochrome P450 monooxygenase ptmQ. Paxilline is converted to beta-paxitriol via C-10 ketoreduction by the short-chain dehydrogenase ptmH which can be monoprenylated at the C-20 by the indole diterpene prenyltransferase ptmD. A two-step elimination (acetylation and elimination) process performed by the O-acetyltransferase ptmV and ptmI leads to the production of the prenylated form of penijanthine. The FAD-linked oxidoreductase ptmO then converts the prenylated form of penijanthine into PC-M5 which is in turn transformed into PC-M4 by the aromatic dimethylallyltransferase ptmE. Five sequential oxidative transformations performed by the cytochrome P450 monooxygenases ptmK, ptmU, ptmL, ptmN and ptmJ yield the various penitrem compounds. PtmK, ptmU and ptmM are involved in the formation of the key bicyclic ring of penitrem C via the formation of the intermediates secopenitrem D and penitrem D. PtmL catalyzes the epoxidation of penitrem D and C to yield penitrem B and F, respectively. PtmJ catalyzes the last benzylic hydroxylation to convert penitrem B to prenitrem E and penitrem F to penitrem A. This Penicillium ochrochloron protein is O-acetyltransferase ptmV.